The chain runs to 646 residues: ATP-dependent rRNA helicase SPB4 (646 aa).

The short motif at 15 to 43 (WGALTPSLAPWILDYLSSMGFEQPTPVQK) is the Q motif element. Residues 46-247 (FDIFRGNKDV…TVGLLYPHKI (202 aa)) form the Helicase ATP-binding domain. Position 59 to 66 (59 to 66 (AVTGSGKT)) interacts with ATP. The DEAD box signature appears at 195-198 (DEAD). The Helicase C-terminal domain maps to 284–434 (ALCQLLERLE…PLAKPPVSVT (151 aa)). Basic and acidic residues-rich tracts occupy residues 539–548 (KKEKAAREAQ) and 566–581 (NEAWSGKHEHEDVKAA). Positions 539 to 646 (KKEKAAREAQ…GGDEFEGFDD (108 aa)) are disordered. Residues 572-623 (KHEHEDVKAARREKKRRKREAQRLGDMTEPEREEQRKLDEMIAEVRRRNAEA) adopt a coiled-coil conformation. Residues 582–591 (RREKKRRKRE) are compositionally biased toward basic residues. The segment covering 600 to 621 (EPEREEQRKLDEMIAEVRRRNA) has biased composition (basic and acidic residues). The span at 622–631 (EAPTPAAQAA) shows a compositional bias: low complexity.

It belongs to the DEAD box helicase family. DDX55/SPB4 subfamily. In terms of assembly, component of pre-60S ribosomal complexes.

It localises to the nucleus. The protein localises to the nucleolus. The catalysed reaction is ATP + H2O = ADP + phosphate + H(+). ATP-binding RNA helicase involved in the biogenesis of 60S ribosomal subunits. Binds 90S pre-ribosomal particles and dissociates from pre-60S ribosomal particles after processing of 27SB pre-rRNA. Required for the normal formation of 18S rRNA through the processing of pre-rRNAs at sites A0, A1 and A2, and the normal formation of 25S and 5.8S rRNAs through the processing of pre-rRNAs at sites C1 and C2. This Chaetomium globosum (strain ATCC 6205 / CBS 148.51 / DSM 1962 / NBRC 6347 / NRRL 1970) (Soil fungus) protein is ATP-dependent rRNA helicase SPB4.